A 466-amino-acid chain; its full sequence is Ribulose bisphosphate carboxylase large chain (466 aa).

K5 bears the N6,N6,N6-trimethyllysine mark. The substrate site is built by N114 and T164. K166 functions as the Proton acceptor in the catalytic mechanism. K168 contributes to the substrate binding site. Mg(2+) is bound by residues K192, D194, and E195. An N6-carboxylysine modification is found at K192. H285 acts as the Proton acceptor in catalysis. The substrate site is built by R286, H318, and S370.

It belongs to the RuBisCO large chain family. Type I subfamily. In terms of assembly, heterohexadecamer of 8 large chains and 8 small chains; disulfide-linked. The disulfide link is formed within the large subunit homodimers. It depends on Mg(2+) as a cofactor. The disulfide bond which can form in the large chain dimeric partners within the hexadecamer appears to be associated with oxidative stress and protein turnover.

It localises to the plastid. It is found in the chloroplast. The catalysed reaction is 2 (2R)-3-phosphoglycerate + 2 H(+) = D-ribulose 1,5-bisphosphate + CO2 + H2O. It carries out the reaction D-ribulose 1,5-bisphosphate + O2 = 2-phosphoglycolate + (2R)-3-phosphoglycerate + 2 H(+). Its function is as follows. RuBisCO catalyzes two reactions: the carboxylation of D-ribulose 1,5-bisphosphate, the primary event in carbon dioxide fixation, as well as the oxidative fragmentation of the pentose substrate in the photorespiration process. Both reactions occur simultaneously and in competition at the same active site. The chain is Ribulose bisphosphate carboxylase large chain from Drosophyllum lusitanicum (Portuguese sundew).